Consider the following 121-residue polypeptide: Chromosome transmission fidelity protein 8 homolog (121 aa).

Belongs to the CTF8 family. Component of the CTF18-RFC complex, which consists of CTF18, CTF8, DSCC1, RFC2, RFC3, RFC4 and RFC5. The CTF18-RFC complex does not interact with the Rad9/Rad1/Hus1 complex. The CTF18-RFC complex interacts with POLH. CTF18/CTF8/DSCC1 associate with PCNA. CTF8 exists as a dimer with DSCC1.

The protein localises to the nucleus. Its function is as follows. Chromosome cohesion factor involved in sister chromatid cohesion and fidelity of chromosome transmission. Component of one of the cell nuclear antigen loader complexes, CTF18-replication factor C (CTF18-RFC), which consists of CTF18, CTF8, DSCC1, RFC2, RFC3, RFC4 and RFC5. The CTF18-RFC complex binds to single-stranded and primed DNAs and has weak ATPase activity that is stimulated the presence of primed DNA, replication protein A (RPA) and proliferating cell nuclear antigen (PCNA). The CTF18-RFC complex catalyzes the ATP-dependent loading of PCNA onto primed and gapped DNA. It also interacts with and stimulates POLH, which is suggestive of a protein network that coordinates DNA repair, recombination and chromosome cohesion reactions with replication fork progression. The sequence is that of Chromosome transmission fidelity protein 8 homolog from Homo sapiens (Human).